Here is a 283-residue protein sequence, read N- to C-terminus: MAGAVSLLGVVGLLLVSALSGVLGDRANPDLRAHPGNAAHPGSGATEPRRRPPLKDQRERTRAGSLPLGALYTAAVAAFVLYKCLQGKDETAVLHEEASKQQPLQSEQQLAQLTQQLAQTEQHLNNLMAQLDPLFERVTTLAGAQQELLNMKLWTIHELLQDSKPDKDMEASEPGEGSGGESAGGGDKVSETGTFLISPHTEASRPLPEDFCLKEDEEEIGDSQAWEEPTNWSTETWNLATSWEVGRGLRRRCSQAVAKGPSHSLGWEGGTTAEGRLKQSLFS.

An N-terminal signal peptide occupies residues 1–24; sequence MAGAVSLLGVVGLLLVSALSGVLG. Positions 30–62 are disordered; sequence DLRAHPGNAAHPGSGATEPRRRPPLKDQRERTR. Basic and acidic residues predominate over residues 47–62; that stretch reads EPRRRPPLKDQRERTR. Residues 65–85 traverse the membrane as a helical segment; sequence SLPLGALYTAAVAAFVLYKCL. Positions 104–134 form a coiled coil; that stretch reads LQSEQQLAQLTQQLAQTEQHLNNLMAQLDPL. Disordered stretches follow at residues 164-207 and 258-283; these read KPDK…SRPL and AKGP…SLFS. Residues 176–187 show a composition bias toward gly residues; that stretch reads EGSGGESAGGGD.

It is found in the membrane. The protein is Coiled-coil domain-containing protein 107 (CCDC107) of Homo sapiens (Human).